The following is a 347-amino-acid chain: NADH-ubiquinone oxidoreductase chain 2 (347 aa).

A run of 9 helical transmembrane segments spans residues proline 3 to serine 23, tyrosine 59 to methionine 79, valine 93 to valine 115, asparagine 150 to leucine 170, isoleucine 178 to proline 198, threonine 199 to leucine 219, isoleucine 242 to proline 262, asparagine 274 to methionine 294, and leucine 326 to leucine 346.

The protein belongs to the complex I subunit 2 family. In terms of assembly, core subunit of respiratory chain NADH dehydrogenase (Complex I) which is composed of 45 different subunits. Interacts with TMEM242.

It localises to the mitochondrion inner membrane. The catalysed reaction is a ubiquinone + NADH + 5 H(+)(in) = a ubiquinol + NAD(+) + 4 H(+)(out). Functionally, core subunit of the mitochondrial membrane respiratory chain NADH dehydrogenase (Complex I) which catalyzes electron transfer from NADH through the respiratory chain, using ubiquinone as an electron acceptor. Essential for the catalytic activity and assembly of complex I. The chain is NADH-ubiquinone oxidoreductase chain 2 from Loxodonta africana (African elephant).